A 319-amino-acid polypeptide reads, in one-letter code: 4-diphosphocytidyl-2-C-methyl-D-erythritol kinase (319 aa).

The active site involves lysine 21. 106-116 (PIGAGLAGGSS) is an ATP binding site. Aspartate 148 is an active-site residue.

This sequence belongs to the GHMP kinase family. IspE subfamily.

The catalysed reaction is 4-CDP-2-C-methyl-D-erythritol + ATP = 4-CDP-2-C-methyl-D-erythritol 2-phosphate + ADP + H(+). The protein operates within isoprenoid biosynthesis; isopentenyl diphosphate biosynthesis via DXP pathway; isopentenyl diphosphate from 1-deoxy-D-xylulose 5-phosphate: step 3/6. In terms of biological role, catalyzes the phosphorylation of the position 2 hydroxy group of 4-diphosphocytidyl-2C-methyl-D-erythritol. The polypeptide is 4-diphosphocytidyl-2-C-methyl-D-erythritol kinase (Prochlorococcus marinus (strain MIT 9313)).